Here is a 356-residue protein sequence, read N- to C-terminus: D-alanine--D-alanine ligase (356 aa).

The region spanning 134 to 339 (KQLFEHRGLP…YPELITKLIE (206 aa)) is the ATP-grasp domain. 167 to 222 (NDKLNYPVFVKPANLGSSIGISKCSNEVELKEGIKEAFQFDRKLVIEQGVNAREIE) serves as a coordination point for ATP. Residues D293, E306, and N308 each coordinate Mg(2+).

This sequence belongs to the D-alanine--D-alanine ligase family. The cofactor is Mg(2+). Mn(2+) is required as a cofactor.

The protein localises to the cytoplasm. It carries out the reaction 2 D-alanine + ATP = D-alanyl-D-alanine + ADP + phosphate + H(+). The protein operates within cell wall biogenesis; peptidoglycan biosynthesis. Its function is as follows. Cell wall formation. This chain is D-alanine--D-alanine ligase, found in Staphylococcus aureus (strain MRSA252).